The following is a 253-amino-acid chain: 5'-nucleotidase SurE (253 aa).

A divalent metal cation is bound by residues aspartate 8, aspartate 9, serine 40, and asparagine 92.

Belongs to the SurE nucleotidase family. It depends on a divalent metal cation as a cofactor.

It localises to the cytoplasm. It carries out the reaction a ribonucleoside 5'-phosphate + H2O = a ribonucleoside + phosphate. Its function is as follows. Nucleotidase that shows phosphatase activity on nucleoside 5'-monophosphates. The sequence is that of 5'-nucleotidase SurE from Hyphomonas neptunium (strain ATCC 15444).